Reading from the N-terminus, the 129-residue chain is Phosphoribosyl-AMP cyclohydrolase (129 aa).

D76 is a Mg(2+) binding site. C77 contributes to the Zn(2+) binding site. Mg(2+) contacts are provided by D78 and D80. The Zn(2+) site is built by C97 and C104.

This sequence belongs to the PRA-CH family. In terms of assembly, homodimer. Requires Mg(2+) as cofactor. The cofactor is Zn(2+).

The protein resides in the cytoplasm. It carries out the reaction 1-(5-phospho-beta-D-ribosyl)-5'-AMP + H2O = 1-(5-phospho-beta-D-ribosyl)-5-[(5-phospho-beta-D-ribosylamino)methylideneamino]imidazole-4-carboxamide. It functions in the pathway amino-acid biosynthesis; L-histidine biosynthesis; L-histidine from 5-phospho-alpha-D-ribose 1-diphosphate: step 3/9. Functionally, catalyzes the hydrolysis of the adenine ring of phosphoribosyl-AMP. In Verminephrobacter eiseniae (strain EF01-2), this protein is Phosphoribosyl-AMP cyclohydrolase.